A 536-amino-acid chain; its full sequence is Arylsulfatase K (536 aa).

The first 22 residues, 1–22, serve as a signal peptide directing secretion; sequence MLLLWVSVVAALALAVLAPGAG. Ca(2+) contacts are provided by D40 and C80. The Nucleophile role is filled by C80. C80 carries the post-translational modification 3-oxoalanine (Cys). N108 carries N-linked (GlcNAc...) asparagine glycosylation. K128 lines the substrate pocket. N-linked (GlcNAc...) asparagine glycans are attached at residues N166 and N193. Residue H251 participates in substrate binding. N262 carries an N-linked (GlcNAc...) asparagine glycan. Residues D313 and H314 each coordinate Ca(2+). N375, N413, and N498 each carry an N-linked (GlcNAc...) asparagine glycan.

This sequence belongs to the sulfatase family. It depends on Ca(2+) as a cofactor. The conversion to 3-oxoalanine (also known as C-formylglycine, FGly), of a serine or cysteine residue in prokaryotes and of a cysteine residue in eukaryotes, is critical for catalytic activity. Post-translationally, the 75-kDa precursor undergoes proteolytic processing to yield a 23 kDa form. In terms of processing, N-glycosylated with both high mannose and complex type sugars. In terms of tissue distribution, expressed at high levels in the placenta and pancreas. Expressed at intermediate levels in the lung, brain, heart, liver and kidney and at low levels in the muscle.

The protein resides in the secreted. The protein localises to the lysosome. It catalyses the reaction an aryl sulfate + H2O = a phenol + sulfate + H(+). The enzyme catalyses Hydrolysis of the 2-sulfate groups of the 2-O-sulfo-D-glucuronate residues of chondroitin sulfate, heparin and heparitin sulfate.. Catalyzes the hydrolysis of pseudosubstrates such as p-nitrocatechol sulfate and p-nitrophenyl sulfate. Catalyzes the hydrolysis of the 2-sulfate groups of the 2-O-sulfo-D-glucuronate residues of chondroitin sulfate, heparin and heparitin sulfate. Acts selectively on 2-sulfoglucuronate and lacks activity against 2-sulfoiduronate. The polypeptide is Arylsulfatase K (ARSK) (Homo sapiens (Human)).